The following is a 995-amino-acid chain: Endosome/lysosome-associated apoptosis and autophagy regulator family member 2 (995 aa).

The signal sequence occupies residues M1–A21. Over L22–K895 the chain is Extracellular. Residues N24, N136, N245, N372, N527, N649, N683, N700, and N758 are each glycosylated (N-linked (GlcNAc...) asparagine). In terms of domain architecture, MRH spans S639–L843. 2 cysteine pairs are disulfide-bonded: C641-C687 and C697-C725. 2 cysteine pairs are disulfide-bonded: C793/C829 and C805/C841. N883 carries N-linked (GlcNAc...) asparagine glycosylation. Residues V896–W916 traverse the membrane as a helical segment. The Cytoplasmic segment spans residues K917–I995.

Belongs to the ELAPOR family. As to expression, expressed in the animal half of the embryo during gastrulation, becoming restricted to the ventral ectoderm at stage 12.5. At the neurula stage, expressed in the anterior ectoderm surrounding the neural plate, and weakly in the epidermis. Expression is especially high in the presumptive hatching gland and cement gland regions. Surprisingly, by the tailbud stage (stage 22), expression is limited to the hatching gland and is not seen in the cement gland. Conversely, in tadpoles expressed broadly in the head, heart and fin. Expression in the head is seen in the primary mouth and in the brain, eyes, otic vesicles and olfactory pits.

It is found in the cell membrane. Functionally, functions as a regulator of the BMP signaling pathway and is involved in epidermal differentiation. In Xenopus laevis (African clawed frog), this protein is Endosome/lysosome-associated apoptosis and autophagy regulator family member 2 (elapor2).